A 218-amino-acid chain; its full sequence is Pyridoxine/pyridoxamine 5'-phosphate oxidase (218 aa).

Substrate contacts are provided by residues 12-15 (RLAY) and Arg-70. Residues 65–70 (RTVLLR), 80–81 (YT), Lys-87, and Gln-109 contribute to the FMN site. Substrate is bound by residues Tyr-127, Arg-131, and Ser-135. Residues 145-146 (QS) and Trp-191 contribute to the FMN site. 197–199 (RLH) contributes to the substrate binding site. Arg-201 contributes to the FMN binding site.

It belongs to the pyridoxamine 5'-phosphate oxidase family. In terms of assembly, homodimer. FMN is required as a cofactor.

It carries out the reaction pyridoxamine 5'-phosphate + O2 + H2O = pyridoxal 5'-phosphate + H2O2 + NH4(+). The enzyme catalyses pyridoxine 5'-phosphate + O2 = pyridoxal 5'-phosphate + H2O2. The protein operates within cofactor metabolism; pyridoxal 5'-phosphate salvage; pyridoxal 5'-phosphate from pyridoxamine 5'-phosphate: step 1/1. Its pathway is cofactor metabolism; pyridoxal 5'-phosphate salvage; pyridoxal 5'-phosphate from pyridoxine 5'-phosphate: step 1/1. Functionally, catalyzes the oxidation of either pyridoxine 5'-phosphate (PNP) or pyridoxamine 5'-phosphate (PMP) into pyridoxal 5'-phosphate (PLP). The sequence is that of Pyridoxine/pyridoxamine 5'-phosphate oxidase from Deinococcus geothermalis (strain DSM 11300 / CIP 105573 / AG-3a).